The chain runs to 229 residues: Growth factor receptor-bound protein 2-A (229 aa).

Residues 1 to 58 enclose the SH3 1 domain; that stretch reads MEAIAKYDFKATADDELSFKRGDVLKVLNEECDQNWYKAELNGKDGFIPKNYIEMKAH. The SH2 domain occupies 60-152; that stretch reads WFFGKIPRAK…NQQIFLRDIE (93 aa). In terms of domain architecture, SH3 2 spans 168–227; it reads QQPTYVQALFDFDPQEDGELGFRRGDFIQVVDNSDPNWWKGTCLSQTGMFPRNYVTPVNR.

It belongs to the GRB2/sem-5/DRK family.

Its subcellular location is the nucleus. The protein localises to the cytoplasm. It is found in the endosome. It localises to the golgi apparatus. Functionally, adapter protein that provides a critical link between cell surface growth factor receptors and the Ras signaling pathway. Promotes meiotic reinitiation during oocyte maturation. The chain is Growth factor receptor-bound protein 2-A (grb2-a) from Xenopus laevis (African clawed frog).